We begin with the raw amino-acid sequence, 334 residues long: Lipoyl synthase (334 aa).

Residues 1–36 (MSDALIAPNASSSEAPQSPAEHYDPTRKQKSADKTA) are disordered. Over residues 7–20 (APNASSSEAPQSPA) the composition is skewed to low complexity. A compositionally biased stretch (basic and acidic residues) spans 21–36 (EHYDPTRKQKSADKTA). [4Fe-4S] cluster is bound by residues cysteine 81, cysteine 86, cysteine 92, cysteine 107, cysteine 111, cysteine 114, and serine 321. The region spanning 92–310 (CFGKGTATFM…EEEAYKMGFT (219 aa)) is the Radical SAM core domain.

Belongs to the radical SAM superfamily. Lipoyl synthase family. It depends on [4Fe-4S] cluster as a cofactor.

The protein resides in the cytoplasm. It catalyses the reaction [[Fe-S] cluster scaffold protein carrying a second [4Fe-4S](2+) cluster] + N(6)-octanoyl-L-lysyl-[protein] + 2 oxidized [2Fe-2S]-[ferredoxin] + 2 S-adenosyl-L-methionine + 4 H(+) = [[Fe-S] cluster scaffold protein] + N(6)-[(R)-dihydrolipoyl]-L-lysyl-[protein] + 4 Fe(3+) + 2 hydrogen sulfide + 2 5'-deoxyadenosine + 2 L-methionine + 2 reduced [2Fe-2S]-[ferredoxin]. It participates in protein modification; protein lipoylation via endogenous pathway; protein N(6)-(lipoyl)lysine from octanoyl-[acyl-carrier-protein]: step 2/2. Functionally, catalyzes the radical-mediated insertion of two sulfur atoms into the C-6 and C-8 positions of the octanoyl moiety bound to the lipoyl domains of lipoate-dependent enzymes, thereby converting the octanoylated domains into lipoylated derivatives. The polypeptide is Lipoyl synthase (Cupriavidus taiwanensis (strain DSM 17343 / BCRC 17206 / CCUG 44338 / CIP 107171 / LMG 19424 / R1) (Ralstonia taiwanensis (strain LMG 19424))).